Reading from the N-terminus, the 257-residue chain is Enolase-phosphatase E1 (257 aa).

The Mg(2+) site is built by aspartate 16 and glutamate 18. Substrate is bound by residues serine 150–serine 151 and lysine 184. Mg(2+) is bound at residue aspartate 209.

Belongs to the HAD-like hydrolase superfamily. MasA/MtnC family. As to quaternary structure, monomer. Requires Mg(2+) as cofactor.

It localises to the cytoplasm. Its subcellular location is the nucleus. The catalysed reaction is 5-methylsulfanyl-2,3-dioxopentyl phosphate + H2O = 1,2-dihydroxy-5-(methylsulfanyl)pent-1-en-3-one + phosphate. It participates in amino-acid biosynthesis; L-methionine biosynthesis via salvage pathway; L-methionine from S-methyl-5-thio-alpha-D-ribose 1-phosphate: step 3/6. It functions in the pathway amino-acid biosynthesis; L-methionine biosynthesis via salvage pathway; L-methionine from S-methyl-5-thio-alpha-D-ribose 1-phosphate: step 4/6. Functionally, bifunctional enzyme that catalyzes the enolization of 2,3-diketo-5-methylthiopentyl-1-phosphate (DK-MTP-1-P) into the intermediate 2-hydroxy-3-keto-5-methylthiopentenyl-1-phosphate (HK-MTPenyl-1-P), which is then dephosphorylated to form the acireductone 1,2-dihydroxy-3-keto-5-methylthiopentene (DHK-MTPene). This is Enolase-phosphatase E1 (Enoph1) from Mus musculus (Mouse).